We begin with the raw amino-acid sequence, 306 residues long: MSNEGGVPNVVKFAFGGTAGMGATLVVQPLDLVKNRMQLSGTTGKKEYRSSMHALTSIMKNEGVFAVYNGLSAGLLRQATYTTTRLGTYAFLLERFTEKDKPLSFGMKAVLGMTAGGIGSFVGTPAEIALIRMTGDGRLPVEQRRNYTGVVNALTRITKEEGVLTLWRGCTPTVLRAMVVNAAQLATYSQAKQALLASGKVQDGIFCHFLASMISGLATTIASMPVDIAKTRIQSMKVIDGKPEYKNAFDVWGKVIKNEGIFALWKGFTPYYMRLGPHTVLTFIILEQMNAAYFQYVLKRDVTSAL.

Solcar repeat units follow at residues 7–95, 103–194, and 203–292; these read VPNV…LLER, LSFG…AKQA, and DGIF…MNAA. Helical transmembrane passes span 9–38, 72–93, 108–122, 172–192, 205–226, and 268–286; these read NVVK…NRMQ, SAGL…AFLL, KAVL…GSFV, PTVL…SQAK, IFCH…SMPV, and FTPY…FIIL.

Belongs to the mitochondrial carrier (TC 2.A.29) family. As to quaternary structure, interacts with ant-1.1 and ced-9. As to expression, ubiquitously expressed, but highly expressed in the anterior pharynx.

It is found in the mitochondrion. It localises to the mitochondrion inner membrane. The catalysed reaction is (S)-malate(in) + 2-oxoglutarate(out) = (S)-malate(out) + 2-oxoglutarate(in). It carries out the reaction malonate(in) + 2-oxoglutarate(out) = malonate(out) + 2-oxoglutarate(in). The enzyme catalyses succinate(in) + 2-oxoglutarate(out) = succinate(out) + 2-oxoglutarate(in). It catalyses the reaction maleate(in) + 2-oxoglutarate(out) = maleate(out) + 2-oxoglutarate(in). The catalysed reaction is oxaloacetate(in) + 2-oxoglutarate(out) = oxaloacetate(out) + 2-oxoglutarate(in). In terms of biological role, catalyzes the transport of 2-oxoglutarate (alpha-oxoglutarate) across the inner mitochondrial membrane in an electroneutral exchange for malate. Can also exchange 2-oxoglutarate for other dicarboxylic acids such as malonate, succinate, maleate and oxaloacetate, although with lower affinity. Contributes to several metabolic processes, including the malate-aspartate shuttle, the oxoglutarate/isocitrate shuttle, in gluconeogenesis from lactate, and in nitrogen metabolism. Maintains mitochondrial fusion and fission events, and the organization and morphology of cristae. Regulator of apoptosis, insulin secretion and germline proliferation. Furthermore, plays a role in the oxidative stress response regulating endogenous levels of reactive oxygen species (ROS). Involved in the regulation of lin-35/Rb-mediated apoptosis in the germline. The chain is Mitochondrial 2-oxoglutarate/malate carrier protein from Caenorhabditis elegans.